Here is a 302-residue protein sequence, read N- to C-terminus: Succinate--CoA ligase [ADP-forming] subunit alpha (302 aa).

CoA-binding positions include 17–20, K43, and 96–98; these read TGST and ITE. Y159 lines the substrate pocket. H247 acts as the Tele-phosphohistidine intermediate in catalysis.

It belongs to the succinate/malate CoA ligase alpha subunit family. In terms of assembly, heterotetramer of two alpha and two beta subunits.

The enzyme catalyses succinate + ATP + CoA = succinyl-CoA + ADP + phosphate. It catalyses the reaction GTP + succinate + CoA = succinyl-CoA + GDP + phosphate. It functions in the pathway carbohydrate metabolism; tricarboxylic acid cycle; succinate from succinyl-CoA (ligase route): step 1/1. Its function is as follows. Succinyl-CoA synthetase functions in the citric acid cycle (TCA), coupling the hydrolysis of succinyl-CoA to the synthesis of either ATP or GTP and thus represents the only step of substrate-level phosphorylation in the TCA. The alpha subunit of the enzyme binds the substrates coenzyme A and phosphate, while succinate binding and nucleotide specificity is provided by the beta subunit. This chain is Succinate--CoA ligase [ADP-forming] subunit alpha, found in Staphylococcus aureus (strain MSSA476).